The chain runs to 215 residues: Ribonuclease T (215 aa).

One can recognise an Exonuclease domain in the interval valine 21–phenylalanine 195. The Mg(2+) site is built by aspartate 24, glutamate 26, histidine 182, and aspartate 187. Histidine 182 serves as the catalytic Proton donor/acceptor.

The protein belongs to the RNase T family. As to quaternary structure, homodimer. Requires Mg(2+) as cofactor.

Trims short 3' overhangs of a variety of RNA species, leaving a one or two nucleotide 3' overhang. Responsible for the end-turnover of tRNA: specifically removes the terminal AMP residue from uncharged tRNA (tRNA-C-C-A). Also appears to be involved in tRNA biosynthesis. The polypeptide is Ribonuclease T (Wigglesworthia glossinidia brevipalpis).